A 210-amino-acid chain; its full sequence is Thymidylate kinase (210 aa).

11 to 18 (GLEGAGKS) contributes to the ATP binding site.

This sequence belongs to the thymidylate kinase family.

The catalysed reaction is dTMP + ATP = dTDP + ADP. In terms of biological role, phosphorylation of dTMP to form dTDP in both de novo and salvage pathways of dTTP synthesis. The sequence is that of Thymidylate kinase from Vibrio campbellii (strain ATCC BAA-1116).